Here is a 270-residue protein sequence, read N- to C-terminus: Acetyl-coenzyme A carboxylase carboxyl transferase subunit beta (270 aa).

The CoA carboxyltransferase N-terminal domain maps to 16–270 (LFAKCPACKH…KLLAFHGGSK (255 aa)). Residues C20, C23, C38, and C41 each coordinate Zn(2+). Residues 20-41 (CPACKHMIYQKDLGLEKICPKC) form a C4-type zinc finger.

It belongs to the AccD/PCCB family. As to quaternary structure, acetyl-CoA carboxylase is a heterohexamer composed of biotin carboxyl carrier protein (AccB), biotin carboxylase (AccC) and two subunits each of ACCase subunit alpha (AccA) and ACCase subunit beta (AccD). The cofactor is Zn(2+).

The protein localises to the cytoplasm. It catalyses the reaction N(6)-carboxybiotinyl-L-lysyl-[protein] + acetyl-CoA = N(6)-biotinyl-L-lysyl-[protein] + malonyl-CoA. It functions in the pathway lipid metabolism; malonyl-CoA biosynthesis; malonyl-CoA from acetyl-CoA: step 1/1. In terms of biological role, component of the acetyl coenzyme A carboxylase (ACC) complex. Biotin carboxylase (BC) catalyzes the carboxylation of biotin on its carrier protein (BCCP) and then the CO(2) group is transferred by the transcarboxylase to acetyl-CoA to form malonyl-CoA. This Streptococcus mutans serotype c (strain NN2025) protein is Acetyl-coenzyme A carboxylase carboxyl transferase subunit beta.